A 143-amino-acid chain; its full sequence is MAIERTFSIIKPDAVAKNHIGAIYNRFETAGLKIVAAKMLHLTKEQAEGFYAEHSERGFFGALVAFMTSGPIMVQVLEGENAVLAHREILGATNPAQAAPGTIRADFAQSIDENAAHGSDSLESAAREIAYFFSAEELCPRTR.

The ATP site is built by Lys-11, Phe-59, Arg-87, Thr-93, Arg-104, and Asn-114. The Pros-phosphohistidine intermediate role is filled by His-117.

It belongs to the NDK family. Homotetramer. Mg(2+) is required as a cofactor.

It is found in the cytoplasm. The enzyme catalyses a 2'-deoxyribonucleoside 5'-diphosphate + ATP = a 2'-deoxyribonucleoside 5'-triphosphate + ADP. It carries out the reaction a ribonucleoside 5'-diphosphate + ATP = a ribonucleoside 5'-triphosphate + ADP. In terms of biological role, major role in the synthesis of nucleoside triphosphates other than ATP. The ATP gamma phosphate is transferred to the NDP beta phosphate via a ping-pong mechanism, using a phosphorylated active-site intermediate. The polypeptide is Nucleoside diphosphate kinase (Shewanella sp. (strain MR-4)).